Reading from the N-terminus, the 119-residue chain is UPF0231 protein ECA3777 (119 aa).

Belongs to the UPF0231 family.

The chain is UPF0231 protein ECA3777 from Pectobacterium atrosepticum (strain SCRI 1043 / ATCC BAA-672) (Erwinia carotovora subsp. atroseptica).